A 163-amino-acid polypeptide reads, in one-letter code: Nucleotide-binding protein CYA_0935 (163 aa).

Belongs to the YajQ family.

In terms of biological role, nucleotide-binding protein. This is Nucleotide-binding protein CYA_0935 from Synechococcus sp. (strain JA-3-3Ab) (Cyanobacteria bacterium Yellowstone A-Prime).